A 664-amino-acid chain; its full sequence is Macoilin (664 aa).

4 consecutive transmembrane segments (helical) span residues 28 to 48 (TFLYLKFLVVWALVLLADFVL), 75 to 95 (AFSVFFVCVAFTSNIICLLFI), 120 to 140 (VCLPTVSLWILFVYIEAAIRF), and 154 to 174 (FAAHCIGYPVVTLGFGFKSYV). Positions 253-265 (REKGKEKDKDAKK) are enriched in basic and acidic residues. Positions 253–274 (REKGKEKDKDAKKHNLGINNNN) are disordered. The residue at position 305 (Ser-305) is a Phosphoserine. Residues 320-348 (KNYKNASGVVNSSPRSHSATNGSIPSSSS) are compositionally biased toward polar residues. The disordered stretch occupies residues 320 to 375 (KNYKNASGVVNSSPRSHSATNGSIPSSSSKNEKKQKCTSKSPSTHKDLMENCIPNN). N-linked (GlcNAc...) asparagine glycosylation is present at Asn-324. Residue Ser-332 is modified to Phosphoserine. Asn-340 and Asn-452 each carry an N-linked (GlcNAc...) asparagine glycan. Positions 630-664 (TSPLSPVSPHYSSKFVETSPSGLDPNASVYQPLKK) are disordered. Ser-631 and Ser-634 each carry phosphoserine. A glycan (N-linked (GlcNAc...) asparagine) is linked at Asn-655.

It belongs to the macoilin family.

Its subcellular location is the rough endoplasmic reticulum membrane. The protein resides in the nucleus membrane. Plays a role in the regulation of neuronal activity. This chain is Macoilin (MACO1), found in Macaca mulatta (Rhesus macaque).